We begin with the raw amino-acid sequence, 114 residues long: Replication initiation control protein YabA (114 aa).

4 residues coordinate Zn(2+): histidine 84, cysteine 86, cysteine 102, and cysteine 105.

The protein belongs to the YabA family. In terms of assembly, homotetramer. Interacts with both DnaA and DnaN, acting as a bridge between these two proteins. It depends on Zn(2+) as a cofactor.

It localises to the cytoplasm. The protein resides in the nucleoid. Its function is as follows. Involved in control of chromosome replication initiation. Inhibits the cooperative binding of DnaA to the oriC region, thus negatively regulating initiation of chromosome replication. Inhibits the ability of DnaA-ATP to form a helix on DNA; does not disassemble preformed DnaA-DNA helices. Decreases the residence time of DnaA on the chromosome at its binding sites (oriC, replication forks and promoter-binding sites). Tethers DnaA to the replication machinery via the DNA polymerase beta sliding clamp subunit (dnaN). Associates with oriC and other DnaA targets on the chromosome in a DnaA-dependent manner. This Ligilactobacillus salivarius (strain UCC118) (Lactobacillus salivarius) protein is Replication initiation control protein YabA.